Reading from the N-terminus, the 539-residue chain is Chaperonin GroEL (539 aa).

Residues 29 to 32 (TLGP), 86 to 90 (DGTTT), Gly413, 479 to 481 (DAL), and Asp495 each bind ATP.

This sequence belongs to the chaperonin (HSP60) family. As to quaternary structure, forms a cylinder of 14 subunits composed of two heptameric rings stacked back-to-back. Interacts with the co-chaperonin GroES.

It is found in the cytoplasm. It carries out the reaction ATP + H2O + a folded polypeptide = ADP + phosphate + an unfolded polypeptide.. In terms of biological role, together with its co-chaperonin GroES, plays an essential role in assisting protein folding. The GroEL-GroES system forms a nano-cage that allows encapsulation of the non-native substrate proteins and provides a physical environment optimized to promote and accelerate protein folding. In Pseudothermotoga lettingae (strain ATCC BAA-301 / DSM 14385 / NBRC 107922 / TMO) (Thermotoga lettingae), this protein is Chaperonin GroEL.